The sequence spans 963 residues: uncharacterized protein (963 aa).

Coiled coils occupy residues 176-236 and 373-467; these read NGRN…HIRM and DYEW…KKTV. The chain crosses the membrane as a helical span at residues 468 to 488; that stretch reads IAAGMLFIVLFSLLQQWIPAI. Coiled-coil stretches lie at residues 536–570 and 647–789; these read RNKQHLLTQRAALQQKEAAYERVIQQFEQWEAEMA and ALHT…LEAS.

It localises to the cell membrane. This is an uncharacterized protein from Bacillus subtilis (strain 168).